We begin with the raw amino-acid sequence, 94 residues long: Small ribosomal subunit protein bS18 (94 aa).

The protein belongs to the bacterial ribosomal protein bS18 family. As to quaternary structure, part of the 30S ribosomal subunit. Forms a tight heterodimer with protein bS6.

Functionally, binds as a heterodimer with protein bS6 to the central domain of the 16S rRNA, where it helps stabilize the platform of the 30S subunit. This chain is Small ribosomal subunit protein bS18, found in Leptospira biflexa serovar Patoc (strain Patoc 1 / Ames).